The chain runs to 156 residues: Small ribosomal subunit protein uS7 (156 aa).

The protein belongs to the universal ribosomal protein uS7 family. As to quaternary structure, part of the 30S ribosomal subunit. Contacts proteins S9 and S11.

One of the primary rRNA binding proteins, it binds directly to 16S rRNA where it nucleates assembly of the head domain of the 30S subunit. Is located at the subunit interface close to the decoding center, probably blocks exit of the E-site tRNA. The protein is Small ribosomal subunit protein uS7 of Streptococcus equi subsp. equi (strain 4047).